The sequence spans 93 residues: Cell division protein CrgA (93 aa).

Helical transmembrane passes span 31-51 (VWFV…LMVF) and 70-90 (LGPW…LLTM).

This sequence belongs to the CrgA family.

Its subcellular location is the cell membrane. Involved in cell division. The sequence is that of Cell division protein CrgA from Mycobacterium bovis (strain ATCC BAA-935 / AF2122/97).